Reading from the N-terminus, the 244-residue chain is tRNA (guanine-N(1)-)-methyltransferase (244 aa).

S-adenosyl-L-methionine is bound by residues Gly111 and 130–135 (IGDYVL).

The protein belongs to the RNA methyltransferase TrmD family. As to quaternary structure, homodimer.

The protein localises to the cytoplasm. The enzyme catalyses guanosine(37) in tRNA + S-adenosyl-L-methionine = N(1)-methylguanosine(37) in tRNA + S-adenosyl-L-homocysteine + H(+). Specifically methylates guanosine-37 in various tRNAs. The polypeptide is tRNA (guanine-N(1)-)-methyltransferase (Phytoplasma australiense).